The sequence spans 96 residues: Ribonuclease P protein component 1 (96 aa).

The protein belongs to the eukaryotic/archaeal RNase P protein component 1 family. Consists of a catalytic RNA component and at least 5 protein subunits.

The protein resides in the cytoplasm. It catalyses the reaction Endonucleolytic cleavage of RNA, removing 5'-extranucleotides from tRNA precursor.. In terms of biological role, part of ribonuclease P, a protein complex that generates mature tRNA molecules by cleaving their 5'-ends. The chain is Ribonuclease P protein component 1 from Methanococcus maripaludis (strain DSM 14266 / JCM 13030 / NBRC 101832 / S2 / LL).